Consider the following 249-residue polypeptide: Esterase YjfP (249 aa).

Displays esterase activity toward palmitoyl-CoA and pNP-butyrate. The chain is Esterase YjfP (yjfP) from Escherichia coli (strain K12).